The chain runs to 530 residues: MADPSEQKEKVVKEKKEKVKKEKVVKEKVAKASSSGQKKKDVKKETGLGLSVKKDENFGEWYSEVCKQDMIEYYDISGCYILRPWSMAIWEIMQIFFDAEIKKMKVKNCYFPLFVSPGVLEKEKDHIEGFAPEVAWVTKSGKSDLEVPIAIRPTSETVMYPYYSKWIRGHRDLPLKLNQWCNVVRWEFSNPTPFIRSREFLWQEGHTAFATKAEADEEVLQILELYRRIYEEYLAVPVVKGMKSENEKFAGGLYTTSVEAFIPNTGRGVQGATSHCLGQNFAKMFEINFENEKAETEMVWQNSWAYSTRTIGVMIMTHGDDKGLVLPPKVASVQVVVIPVPYKDANTQGIYDACTATASALCEAGIRAEEDLRDNYSPGWKYSDWEMKGVPLRIEIGPRDLENDQVRTVRRDNGVKEDIPRGSLVEHVKELLEKIQQNMYEVAKQKREACVQEVKTWDEFIKALNEKKLILAPWCDEEEVERDVKARTKGETGAAKTLCSPFDQPELPEGTLCFASGKPAKKWTYWGRSY.

It belongs to the class-II aminoacyl-tRNA synthetase family.

It localises to the cytoplasm. The protein localises to the cytosol. The enzyme catalyses tRNA(Pro) + L-proline + ATP = L-prolyl-tRNA(Pro) + AMP + diphosphate. In terms of biological role, catalyzes the attachment of proline to tRNA(Pro) in a two-step reaction: proline is first activated by ATP to form Pro-AMP and then transferred to the acceptor end of tRNA(Pro). This Arabidopsis thaliana (Mouse-ear cress) protein is Proline--tRNA ligase, cytoplasmic.